Reading from the N-terminus, the 185-residue chain is DAN domain family member 5 (185 aa).

The first 23 residues, 1–23, serve as a signal peptide directing secretion; sequence MFRSQFTTLLGLFSGAWLPTGSG. N39 is a glycosylation site (N-linked (GlcNAc...) asparagine). 4 cysteine pairs are disulfide-bonded: C97/C144, C111/C158, C121/C179, and C125/C181. The CTCK domain occupies 97 to 182; the sequence is CKALSFVQVI…TVLVQKCQCR (86 aa).

Belongs to the DAN family. As to expression, expressed throughout the neural retina and in the photoreceptor nuclear layer. In the retina, widely expressed in inner nuclear layer, as well as in the ganglion cell layer.

The protein localises to the secreted. In terms of biological role, antagonist of the extracellular signaling protein NODAL, which is required for correct left-right patterning during embryonic development. Antagonist of BMP4 signaling. Antagonist of TGF-beta signaling. Independently of its role in left-right axis establishment, plays a role during heart development, possibly through the regulation of TGF-beta/Nodal signaling pathway. Displays anti-angiogenic activity by inhibiting endothelial sprouting, migration, and proliferation. Once internalized by endothelial cells, may alter their redox and glycolytic balance. The sequence is that of DAN domain family member 5 (Dand5) from Mus musculus (Mouse).